The following is a 346-amino-acid chain: Histidinol-phosphate aminotransferase (346 aa).

Lys209 is subject to N6-(pyridoxal phosphate)lysine.

Belongs to the class-II pyridoxal-phosphate-dependent aminotransferase family. Histidinol-phosphate aminotransferase subfamily. In terms of assembly, homodimer. The cofactor is pyridoxal 5'-phosphate.

The enzyme catalyses L-histidinol phosphate + 2-oxoglutarate = 3-(imidazol-4-yl)-2-oxopropyl phosphate + L-glutamate. It functions in the pathway amino-acid biosynthesis; L-histidine biosynthesis; L-histidine from 5-phospho-alpha-D-ribose 1-diphosphate: step 7/9. The protein is Histidinol-phosphate aminotransferase of Vibrio campbellii (strain ATCC BAA-1116).